Reading from the N-terminus, the 241-residue chain is Protocatechuate 3,4-dioxygenase beta chain (241 aa).

Fe cation-binding residues include Tyr-109, Tyr-148, His-161, and His-163.

The protein belongs to the intradiol ring-cleavage dioxygenase family. In terms of assembly, the enzyme is an oligomer of 12 copies of the alpha and beta chains. Requires Fe(3+) as cofactor.

The catalysed reaction is 3,4-dihydroxybenzoate + O2 = 3-carboxy-cis,cis-muconate + 2 H(+). It functions in the pathway aromatic compound metabolism; beta-ketoadipate pathway; 3-carboxy-cis,cis-muconate from 3,4-dihydroxybenzoate: step 1/1. Plays an essential role in the utilization of numerous aromatic and hydroaromatic compounds via the beta-ketoadipate pathway. The polypeptide is Protocatechuate 3,4-dioxygenase beta chain (pcaH) (Acinetobacter baylyi (strain ATCC 33305 / BD413 / ADP1)).